Consider the following 371-residue polypeptide: MNLKDKNIIITAGGTGGHIYPALAVAEMLRENNANVTWVGTPNSMEANIVPEYFNMQYIKSSGVRGKGLKRKVAFPFTLISSTLKARKILKKLKIDLVIGFGGYVSGPICLAAVQKDIPIIIHEQNAKIGLTNRILAKLATKVCLAFDVEDIQKRLSPKQLAKTQVVGNPIRKDIIALNNKTKNITENGKLKLLVLGGSQGAKSINNIIPDLIIEANKQGISLKVWHQTGKLSFEETKNNYNQVPSTHIKDISAYITDMTNAYEWADILICRAGALTVSESAIAGVPAIFIPLPSAVDDHQFFNAQNMVKNNAGFCIRQDQMTLENLIDIIKPLYEDRDKLKEISQKAKNTLIKDSSEQILKAVEQILNKK.

UDP-N-acetyl-alpha-D-glucosamine-binding positions include 15 to 17 (TGG), Asn126, Arg172, Ser199, Ile256, 275 to 280 (ALTVSE), and Gln301.

It belongs to the glycosyltransferase 28 family. MurG subfamily.

Its subcellular location is the cell inner membrane. The catalysed reaction is di-trans,octa-cis-undecaprenyl diphospho-N-acetyl-alpha-D-muramoyl-L-alanyl-D-glutamyl-meso-2,6-diaminopimeloyl-D-alanyl-D-alanine + UDP-N-acetyl-alpha-D-glucosamine = di-trans,octa-cis-undecaprenyl diphospho-[N-acetyl-alpha-D-glucosaminyl-(1-&gt;4)]-N-acetyl-alpha-D-muramoyl-L-alanyl-D-glutamyl-meso-2,6-diaminopimeloyl-D-alanyl-D-alanine + UDP + H(+). Its pathway is cell wall biogenesis; peptidoglycan biosynthesis. Its function is as follows. Cell wall formation. Catalyzes the transfer of a GlcNAc subunit on undecaprenyl-pyrophosphoryl-MurNAc-pentapeptide (lipid intermediate I) to form undecaprenyl-pyrophosphoryl-MurNAc-(pentapeptide)GlcNAc (lipid intermediate II). In Francisella philomiragia subsp. philomiragia (strain ATCC 25017 / CCUG 19701 / FSC 153 / O#319-036), this protein is UDP-N-acetylglucosamine--N-acetylmuramyl-(pentapeptide) pyrophosphoryl-undecaprenol N-acetylglucosamine transferase.